Reading from the N-terminus, the 353-residue chain is Alanine racemase (353 aa).

Lys33 acts as the Proton acceptor; specific for D-alanine in catalysis. N6-(pyridoxal phosphate)lysine is present on Lys33. Arg129 is a substrate binding site. The active-site Proton acceptor; specific for L-alanine is Tyr250. Met298 contributes to the substrate binding site.

The protein belongs to the alanine racemase family. It depends on pyridoxal 5'-phosphate as a cofactor.

It catalyses the reaction L-alanine = D-alanine. Its pathway is amino-acid biosynthesis; D-alanine biosynthesis; D-alanine from L-alanine: step 1/1. Catalyzes the interconversion of L-alanine and D-alanine. May also act on other amino acids. The protein is Alanine racemase (alr) of Aromatoleum aromaticum (strain DSM 19018 / LMG 30748 / EbN1) (Azoarcus sp. (strain EbN1)).